A 791-amino-acid polypeptide reads, in one-letter code: Lon protease (791 aa).

Residues 28-223 enclose the Lon N-terminal domain; that stretch reads LPVVVISEIM…YILQDIQSLL (196 aa). 374 to 381 lines the ATP pocket; the sequence is GPPGVGKT. Positions 610-791 constitute a Lon proteolytic domain; that stretch reads KEKIGSTNGL…SDVFSQVFVV (182 aa). Residues Ser697 and Lys740 contribute to the active site.

It belongs to the peptidase S16 family. Homohexamer. Organized in a ring with a central cavity.

The protein resides in the cytoplasm. The catalysed reaction is Hydrolysis of proteins in presence of ATP.. In terms of biological role, ATP-dependent serine protease that mediates the selective degradation of mutant and abnormal proteins as well as certain short-lived regulatory proteins. Required for cellular homeostasis and for survival from DNA damage and developmental changes induced by stress. Degrades polypeptides processively to yield small peptide fragments that are 5 to 10 amino acids long. Binds to DNA in a double-stranded, site-specific manner. In Aster yellows witches'-broom phytoplasma (strain AYWB), this protein is Lon protease.